Here is a 158-residue protein sequence, read N- to C-terminus: 6,7-dimethyl-8-ribityllumazine synthase (158 aa).

5-amino-6-(D-ribitylamino)uracil-binding positions include phenylalanine 22, 57–59 (AYE), and 84–86 (TVI). 89–90 (GT) contributes to the (2S)-2-hydroxy-3-oxobutyl phosphate binding site. The active-site Proton donor is the histidine 92. Phenylalanine 117 provides a ligand contact to 5-amino-6-(D-ribitylamino)uracil. Arginine 131 is a binding site for (2S)-2-hydroxy-3-oxobutyl phosphate.

The protein belongs to the DMRL synthase family. Forms an icosahedral capsid composed of 60 subunits, arranged as a dodecamer of pentamers.

It catalyses the reaction (2S)-2-hydroxy-3-oxobutyl phosphate + 5-amino-6-(D-ribitylamino)uracil = 6,7-dimethyl-8-(1-D-ribityl)lumazine + phosphate + 2 H2O + H(+). It participates in cofactor biosynthesis; riboflavin biosynthesis; riboflavin from 2-hydroxy-3-oxobutyl phosphate and 5-amino-6-(D-ribitylamino)uracil: step 1/2. Functionally, catalyzes the formation of 6,7-dimethyl-8-ribityllumazine by condensation of 5-amino-6-(D-ribitylamino)uracil with 3,4-dihydroxy-2-butanone 4-phosphate. This is the penultimate step in the biosynthesis of riboflavin. The protein is 6,7-dimethyl-8-ribityllumazine synthase of Pectobacterium carotovorum subsp. carotovorum (strain PC1).